Consider the following 495-residue polypeptide: Ectonucleoside triphosphate diphosphohydrolase 2 (495 aa).

Residues 1-7 are Cytoplasmic-facing; the sequence is MAGKVRS. A helical transmembrane segment spans residues 8-28; that stretch reads LLPPLLLAAAGLAGLLLLCVP. Topologically, residues 29 to 462 are extracellular; sequence TRDVREPPAL…PGLRKGTDFS (434 aa). N-linked (GlcNAc...) asparagine glycosylation occurs at Asn64. Cysteines 75 and 99 form a disulfide. N-linked (GlcNAc...) asparagine glycosylation occurs at Asn129. Glu165 serves as the catalytic Proton acceptor. An ATP-binding site is contributed by 204-208; that stretch reads GASTQ. Disulfide bonds link Cys242-Cys284, Cys265-Cys310, Cys323-Cys328, and Cys377-Cys399. Asn294 carries N-linked (GlcNAc...) asparagine glycosylation. 2 N-linked (GlcNAc...) asparagine glycosylation sites follow: Asn378 and Asn443. The helical transmembrane segment at 463–483 threads the bilayer; that stretch reads SWVVLLLLFASALLAALVLLL. At 484–495 the chain is on the cytoplasmic side; it reads RQVHSAKLPSTI.

Belongs to the GDA1/CD39 NTPase family. Ca(2+) serves as cofactor. The cofactor is Mg(2+). Brain, placenta, skeletal muscle, kidney, pancreas, heart, ovary, testis, colon, small intestine, prostate and pancreas. No expression in adult thymus, spleen, lung, liver and peripheral blood leukocytes.

The protein resides in the cell membrane. It localises to the endoplasmic reticulum membrane. Its function is as follows. In the nervous system, could hydrolyze ATP and other nucleotides to regulate purinergic neurotransmission. Hydrolyzes ADP only to a marginal extent. The order of activity with different substrates is ATP &gt; GTP &gt; CTP = ITP &gt; UTP &gt;&gt; ADP = UDP. In Homo sapiens (Human), this protein is Ectonucleoside triphosphate diphosphohydrolase 2 (ENTPD2).